The chain runs to 135 residues: Histone H2A.4 (135 aa).

This sequence belongs to the histone H2A family. In terms of assembly, the nucleosome is a histone octamer containing two molecules each of H2A, H2B, H3 and H4 assembled in one H3-H4 heterotetramer and two H2A-H2B heterodimers. The octamer wraps approximately 147 bp of DNA. As to expression, expressed preferentially in meristematic tissues of young seedlings, in stigma and ovary but not in pollen.

It is found in the nucleus. The protein localises to the chromosome. Core component of nucleosome. Nucleosomes wrap and compact DNA into chromatin, limiting DNA accessibility to the cellular machineries which require DNA as a template. Histones thereby play a central role in transcription regulation, DNA repair, DNA replication and chromosomal stability. DNA accessibility is regulated via a complex set of post-translational modifications of histones, also called histone code, and nucleosome remodeling. This chain is Histone H2A.4 (TH254), found in Triticum aestivum (Wheat).